We begin with the raw amino-acid sequence, 224 residues long: F420-dependent NADP reductase (224 aa).

NADP(+) contacts are provided by residues 9–12 (TGDQ), 31–32 (SR), Lys-36, Val-74, Val-100, and Ala-145.

This sequence belongs to the F420-dependent NADP reductase family. Homotetramer.

It carries out the reaction reduced coenzyme F420-(gamma-L-Glu)(n) + NADP(+) = oxidized coenzyme F420-(gamma-L-Glu)(n) + NADPH + 2 H(+). In terms of biological role, catalyzes the reduction of NADP(+) with F420H(2) via hydride transfer, and the reverse reaction, i.e. the reduction of F420 with NADPH. Probably functions in the regeneration of NADPH required in biosynthetic reactions. The polypeptide is F420-dependent NADP reductase (Methanothermobacter marburgensis (strain ATCC BAA-927 / DSM 2133 / JCM 14651 / NBRC 100331 / OCM 82 / Marburg) (Methanobacterium thermoautotrophicum)).